Reading from the N-terminus, the 226-residue chain is MRRAIRVMALSAIGLLLLPYLLTPLYRIGHPVSTLMIWRTLSGAPMSRQWIDFAALPPSLPRSVVASEDAKFCSHQGIDWDSLREVLDDAEDGEFKRGGSTITQQVAKNLFLWPGRSMVRKALEFPLAMWIDAVLSKQRILEIYLNIAEWGPGGQFGVEAGSRYAFGRSAASLTAREAALMAAILPNPVRRSARKPGPGVRRLAGTYMARARAAELRGCWSGNRSL.

The chain crosses the membrane as a helical span at residues 7 to 29 (VMALSAIGLLLLPYLLTPLYRIG).

The protein belongs to the glycosyltransferase 51 family.

It localises to the cell inner membrane. It catalyses the reaction [GlcNAc-(1-&gt;4)-Mur2Ac(oyl-L-Ala-gamma-D-Glu-L-Lys-D-Ala-D-Ala)](n)-di-trans,octa-cis-undecaprenyl diphosphate + beta-D-GlcNAc-(1-&gt;4)-Mur2Ac(oyl-L-Ala-gamma-D-Glu-L-Lys-D-Ala-D-Ala)-di-trans,octa-cis-undecaprenyl diphosphate = [GlcNAc-(1-&gt;4)-Mur2Ac(oyl-L-Ala-gamma-D-Glu-L-Lys-D-Ala-D-Ala)](n+1)-di-trans,octa-cis-undecaprenyl diphosphate + di-trans,octa-cis-undecaprenyl diphosphate + H(+). Its pathway is cell wall biogenesis; peptidoglycan biosynthesis. Peptidoglycan polymerase that catalyzes glycan chain elongation from lipid-linked precursors. This chain is Biosynthetic peptidoglycan transglycosylase, found in Nitrobacter winogradskyi (strain ATCC 25391 / DSM 10237 / CIP 104748 / NCIMB 11846 / Nb-255).